Reading from the N-terminus, the 140-residue chain is Protein ApaG (140 aa).

The ApaG domain occupies 13–137; it reads EARTRDIVVR…FSLHLPGAAM (125 aa).

This Caulobacter vibrioides (strain ATCC 19089 / CIP 103742 / CB 15) (Caulobacter crescentus) protein is Protein ApaG.